The sequence spans 192 residues: MGVHECPAWLWLLLSLVSLPLGLPVPGAPPRLVCDSRVLERYLLEAKEAENVTMGCSESCSLNENITVPDTKVNFYAWKRIEVGQQAVEVWQGLALLSEAVLRGQAVLANSSQPFEPLQLHMDKAISGLRSITTLLRALGAQEAISLPDAASAAPLRTITADTFCKLFRVYSNFLRGKLKLYTGEACRRGDR.

The signal sequence occupies residues 1 to 27 (MGVHECPAWLWLLLSLVSLPLGLPVPG). Disulfide bonds link Cys-34–Cys-187 and Cys-56–Cys-60. An N-linked (GlcNAc...) asparagine glycan is attached at Asn-51. 2 N-linked (GlcNAc...) asparagine glycosylation sites follow: Asn-65 and Asn-110. Ser-152 carries O-linked (GalNAc...) serine glycosylation.

The protein belongs to the EPO/TPO family. Produced by kidney or liver of adult mammals and by liver of fetal or neonatal mammals.

The protein localises to the secreted. In terms of biological role, hormone involved in the regulation of erythrocyte proliferation and differentiation and the maintenance of a physiological level of circulating erythrocyte mass. Binds to EPOR leading to EPOR dimerization and JAK2 activation thereby activating specific downstream effectors, including STAT1 and STAT3. This Macaca mulatta (Rhesus macaque) protein is Erythropoietin (EPO).